Here is a 56-residue protein sequence, read N- to C-terminus: Trypsin inhibitor 1 (56 aa).

The N-terminal stretch at 1 to 25 (MATTMAKLITLVVLAILAFVEVSVS) is a signal peptide. The propeptide occupies 26–39 (GYKTSISTITIEDN). Positions 40–53 (GRCTKSIPPICFPD) form a cross-link, cyclopeptide (Gly-Asp). Cys-42 and Cys-50 form a disulfide bridge. The propeptide occupies 54–56 (GRP).

In terms of processing, this is a cyclic peptide.

Its function is as follows. Inhibits trypsin, cathepsin G, elastase, chymotrypsin and thrombin. Does not inhibit factor Xa. This chain is Trypsin inhibitor 1, found in Helianthus annuus (Common sunflower).